The sequence spans 558 residues: Glucose-6-phosphate isomerase (558 aa).

Lys12 is modified (N6-acetyllysine). 2 positions are modified to phosphoserine: Ser86 and Ser107. Lys142 carries the N6-acetyllysine modification. A D-glucose 6-phosphate-binding site is contributed by Gly159–Ser160. Ser185 bears the Phosphoserine; by CK2 mark. Ser210–Thr215 provides a ligand contact to D-glucose 6-phosphate. Thr250 is modified (phosphothreonine). Residues Gln354, Glu358, and His389 each contribute to the D-glucose 6-phosphate site. The active-site Proton donor is the Glu358. Residue His389 is part of the active site. Lys454 is modified (N6-acetyllysine; alternate). The residue at position 454 (Lys454) is an N6-malonyllysine; alternate. An N6-succinyllysine; alternate modification is found at Lys454. A Phosphoserine modification is found at Ser455. Lys519 is a D-glucose 6-phosphate binding site. Lys519 is a catalytic residue.

It belongs to the GPI family. In terms of assembly, homodimer; in the catalytically active form. Monomer in the secreted form. Phosphorylation at Ser-185 by CK2 has been shown to decrease enzymatic activity and may contribute to secretion by a non-classical secretory pathway. In terms of processing, ISGylated.

The protein localises to the cytoplasm. The protein resides in the secreted. The catalysed reaction is alpha-D-glucose 6-phosphate = beta-D-fructose 6-phosphate. Its pathway is carbohydrate degradation; glycolysis; D-glyceraldehyde 3-phosphate and glycerone phosphate from D-glucose: step 2/4. In terms of biological role, in the cytoplasm, catalyzes the conversion of glucose-6-phosphate to fructose-6-phosphate, the second step in glycolysis, and the reverse reaction during gluconeogenesis. Besides it's role as a glycolytic enzyme, also acts as a secreted cytokine: acts as an angiogenic factor (AMF) that stimulates endothelial cell motility. Acts as a neurotrophic factor, neuroleukin, for spinal and sensory neurons. It is secreted by lectin-stimulated T-cells and induces immunoglobulin secretion. This Cricetulus griseus (Chinese hamster) protein is Glucose-6-phosphate isomerase.